The following is a 338-amino-acid chain: Large ribosomal subunit protein uL10 (338 aa).

A disordered region spans residues 303 to 338 (VEVSAAPAAEEEKEEEKKEEEKKEEDTGAAGLALLF). Residues 317–328 (EEKKEEEKKEED) are compositionally biased toward basic and acidic residues.

This sequence belongs to the universal ribosomal protein uL10 family. As to quaternary structure, part of the 50S ribosomal subunit. Forms part of the ribosomal stalk which helps the ribosome interact with GTP-bound translation factors. Forms a heptameric L10(L12)2(L12)2(L12)2 complex, where L10 forms an elongated spine to which the L12 dimers bind in a sequential fashion.

In terms of biological role, forms part of the ribosomal stalk, playing a central role in the interaction of the ribosome with GTP-bound translation factors. In Methanocaldococcus jannaschii (strain ATCC 43067 / DSM 2661 / JAL-1 / JCM 10045 / NBRC 100440) (Methanococcus jannaschii), this protein is Large ribosomal subunit protein uL10.